A 762-amino-acid chain; its full sequence is Probable inorganic carbon transporter subunit DabA (762 aa).

Zn(2+) contacts are provided by Cys279, Asp281, His461, and Cys476.

It belongs to the inorganic carbon transporter (TC 9.A.2) DabA family. Forms a complex with DabB. Zn(2+) is required as a cofactor.

It localises to the cell inner membrane. Part of an energy-coupled inorganic carbon pump. The sequence is that of Probable inorganic carbon transporter subunit DabA from Legionella pneumophila (strain Lens).